A 512-amino-acid polypeptide reads, in one-letter code: tRNA-2-methylthio-N(6)-dimethylallyladenosine synthase (512 aa).

The 117-residue stretch at 17–133 (RTYEVRTFGC…LPTLLERSAH (117 aa)) folds into the MTTase N-terminal domain. [4Fe-4S] cluster-binding residues include C26, C62, C96, C170, C174, and C177. A Radical SAM core domain is found at 156-392 (RESAYAGWVS…LALQERISEE (237 aa)). The TRAM domain occupies 395–461 (RKLIGTTQEL…PHFLIADGGV (67 aa)). The tract at residues 473–512 (TELGETPTTAPVGVGLGMPSIKKPEPTTAGGCSTGGCGCE) is disordered.

This sequence belongs to the methylthiotransferase family. MiaB subfamily. As to quaternary structure, monomer. [4Fe-4S] cluster is required as a cofactor.

Its subcellular location is the cytoplasm. It catalyses the reaction N(6)-dimethylallyladenosine(37) in tRNA + (sulfur carrier)-SH + AH2 + 2 S-adenosyl-L-methionine = 2-methylsulfanyl-N(6)-dimethylallyladenosine(37) in tRNA + (sulfur carrier)-H + 5'-deoxyadenosine + L-methionine + A + S-adenosyl-L-homocysteine + 2 H(+). Catalyzes the methylthiolation of N6-(dimethylallyl)adenosine (i(6)A), leading to the formation of 2-methylthio-N6-(dimethylallyl)adenosine (ms(2)i(6)A) at position 37 in tRNAs that read codons beginning with uridine. This is tRNA-2-methylthio-N(6)-dimethylallyladenosine synthase from Corynebacterium jeikeium (strain K411).